The sequence spans 1154 residues: ATP-dependent helicase/deoxyribonuclease subunit B (1154 aa).

Residues 1–284 (MSVRFIIGRS…EQLRHNVRHK (284 aa)) form the UvrD-like helicase ATP-binding domain. Position 8–15 (8–15 (GRSGSGKT)) interacts with ATP. The UvrD-like helicase C-terminal domain occupies 279–583 (HNVRHKHEEL…QFSLVPPATD (305 aa)). Residues C799, C1120, C1123, and C1129 each contribute to the [4Fe-4S] cluster site.

It belongs to the helicase family. AddB/RexB type 1 subfamily. Heterodimer of AddA and AddB. It depends on Mg(2+) as a cofactor. [4Fe-4S] cluster serves as cofactor.

In terms of biological role, the heterodimer acts as both an ATP-dependent DNA helicase and an ATP-dependent, dual-direction single-stranded exonuclease. Recognizes the chi site generating a DNA molecule suitable for the initiation of homologous recombination. The AddB subunit has 5' -&gt; 3' nuclease activity but not helicase activity. The polypeptide is ATP-dependent helicase/deoxyribonuclease subunit B (Anoxybacillus flavithermus (strain DSM 21510 / WK1)).